The primary structure comprises 174 residues: Small ribosomal subunit protein uS5c (174 aa).

An S5 DRBM domain is found at 17 to 80 (WEERVVQVKR…TDAKKHLVTV (64 aa)).

This sequence belongs to the universal ribosomal protein uS5 family. In terms of assembly, part of the 30S ribosomal subunit. Contacts protein S4.

Its subcellular location is the plastid. It is found in the chloroplast. In terms of biological role, with S4 and S12 plays an important role in translational accuracy. This Porphyra purpurea (Red seaweed) protein is Small ribosomal subunit protein uS5c (rps5).